The sequence spans 401 residues: Arylacetamide deacetylase-like 2 (401 aa).

The first 18 residues, 1 to 18, serve as a signal peptide directing secretion; it reads MGLKALCLGLLCVLFVSH. The Involved in the stabilization of the negatively charged intermediate by the formation of the oxyanion hole motif lies at 111 to 113; it reads HGG. An intrachain disulfide couples cysteine 116 to cysteine 338. Active-site residues include serine 189, aspartate 341, and histidine 371.

Belongs to the 'GDXG' lipolytic enzyme family.

The protein resides in the secreted. The polypeptide is Arylacetamide deacetylase-like 2 (AADACL2) (Homo sapiens (Human)).